We begin with the raw amino-acid sequence, 944 residues long: Isoleucine--tRNA ligase (944 aa).

The 'HIGH' region signature appears at 58–68; sequence PYANGDIHIGH. Glutamate 568 serves as a coordination point for L-isoleucyl-5'-AMP. The 'KMSKS' region signature appears at 609 to 613; sequence KMSKS. Lysine 612 is a binding site for ATP. 4 residues coordinate Zn(2+): cysteine 907, cysteine 910, cysteine 927, and cysteine 930.

This sequence belongs to the class-I aminoacyl-tRNA synthetase family. IleS type 1 subfamily. Monomer. It depends on Zn(2+) as a cofactor.

It is found in the cytoplasm. The catalysed reaction is tRNA(Ile) + L-isoleucine + ATP = L-isoleucyl-tRNA(Ile) + AMP + diphosphate. In terms of biological role, catalyzes the attachment of isoleucine to tRNA(Ile). As IleRS can inadvertently accommodate and process structurally similar amino acids such as valine, to avoid such errors it has two additional distinct tRNA(Ile)-dependent editing activities. One activity is designated as 'pretransfer' editing and involves the hydrolysis of activated Val-AMP. The other activity is designated 'posttransfer' editing and involves deacylation of mischarged Val-tRNA(Ile). In Psychromonas ingrahamii (strain DSM 17664 / CCUG 51855 / 37), this protein is Isoleucine--tRNA ligase.